A 192-amino-acid polypeptide reads, in one-letter code: GTP cyclohydrolase-2 (192 aa).

A GTP-binding site is contributed by 50–54; sequence RLHSE. Residues cysteine 55, cysteine 66, and cysteine 68 each contribute to the Zn(2+) site. GTP is bound by residues 92 to 94 and threonine 114; that span reads EGR. The active-site Proton acceptor is the aspartate 126. The active-site Nucleophile is the arginine 128. Residues threonine 149 and lysine 154 each coordinate GTP.

This sequence belongs to the GTP cyclohydrolase II family. Zn(2+) is required as a cofactor.

The catalysed reaction is GTP + 4 H2O = 2,5-diamino-6-hydroxy-4-(5-phosphoribosylamino)-pyrimidine + formate + 2 phosphate + 3 H(+). It participates in cofactor biosynthesis; riboflavin biosynthesis; 5-amino-6-(D-ribitylamino)uracil from GTP: step 1/4. In terms of biological role, catalyzes the conversion of GTP to 2,5-diamino-6-ribosylamino-4(3H)-pyrimidinone 5'-phosphate (DARP), formate and pyrophosphate. This is GTP cyclohydrolase-2 from Helicobacter pylori (strain P12).